Consider the following 133-residue polypeptide: Putative pre-16S rRNA nuclease (133 aa).

This sequence belongs to the YqgF nuclease family.

The protein resides in the cytoplasm. In terms of biological role, could be a nuclease involved in processing of the 5'-end of pre-16S rRNA. This is Putative pre-16S rRNA nuclease from Dehalococcoides mccartyi (strain ATCC BAA-2266 / KCTC 15142 / 195) (Dehalococcoides ethenogenes (strain 195)).